The sequence spans 1062 residues: Histone H3-lysine(4) N-trimethyltransferase ATX1 (1062 aa).

The segment at 159 to 184 (NAFSGNKQNGSSRRKGSSSKNQDKAT) is disordered. The 65-residue stretch at 301 to 365 (PGDIVWAKLA…VKQAISFIKG (65 aa)) folds into the PWWP domain. The disordered stretch occupies residues 401 to 424 (QLQKGADSVDSDMANSTEEGNSGG). The 60-residue stretch at 441–500 (DFRHIIGDLLIINLGKVVTDSQFFKDENHIWPEGYTAMRKFTSLTDHSASALYKMEVLRD) folds into the FYR N-terminal domain. The FYR C-terminal domain occupies 504-586 (KTHPLFIVTA…RPSSHVSMCK (83 aa)). Residues 591 to 647 (RHQNQPTGYRPVRVDWKDLDKCNVCHMDEEYENNLFLQCDKCRMMVHAKCYGELEPC) form a Phorbol-ester/DAG-type zinc finger. The interaction with PIP5 stretch occupies residues 599 to 1062 (YRPVRVDWKD…RCDLIDWTAE (464 aa)). The segment at 609-660 (LDKCNVCHMDEEYENNLFLQCDKCRMMVHAKCYGELEPCDGALWLCNLCRPG) adopts a PHD-type 1 zinc-finger fold. A C2HC pre-PHD-type zinc finger spans residues 665–698 (PPRCCLCPVVGGAMKPTTDGRWAHLACAIWIPET). The PHD-type 2 zinc finger occupies 722–785 (LMCTICGVSY…RMLSFCKRHR (64 aa)). Residues 898–1016 (KRLAFGKSGI…KWEELTYDYR (119 aa)) form the SET domain. His908 provides a ligand contact to S-adenosyl-L-methionine. O-linked (GlcNAc) serine glycosylation occurs at Ser947. S-adenosyl-L-methionine-binding positions include Tyr954 and 977–978 (NH). Zn(2+) contacts are provided by Cys980, Cys1026, Cys1028, and Cys1033. A Post-SET domain is found at 1022 to 1038 (ERLSCSCGFPGCRGVVN).

The protein belongs to the class V-like SAM-binding methyltransferase superfamily. Histone-lysine methyltransferase family. TRX/MLL subfamily. Interacts with PIP5. Interacts with WDR5A. Binds to CLF in the nucleus. Interacts with NRPB1 CTD domain, especially when NRPB1 is phosphorylated on 'Ser-5' of the heptapeptide repeat. Component of a nuclear protein complex containing at least TATA binding proteins (TBPs, e.g. TBP1 and TBP2) and ATX1. Associates with ULT1 for trimethylating 'Lys-4' on histone H3 (H3K4me3) at flower MADS box gene loci. Interacts with SEC. In terms of assembly, interacts with A4/EF1A in the cytoplasm on the nuclear periphery. Post-translationally, activated via O-glycosylation by SEC; this modification triggers FLC locus H3K4me3 histone modification, thus preventing premature flowering. As to expression, strongly expressed in cotyledons, but weak levels in the first true leaves, except at the hydothodes. Ubiquitous with higher levels in dividing tissues, including inflorescence meristem and flower primordia. Expressed also in leaves (especially at hydathodes), in growing inflorescence stems and in the mature flowers. Strongly expressed in young seedlings.

It localises to the nucleus. The protein resides in the cytoplasm. Its subcellular location is the perinuclear region. The enzyme catalyses L-lysyl(4)-[histone H3] + 3 S-adenosyl-L-methionine = N(6),N(6),N(6)-trimethyl-L-lysyl(4)-[histone H3] + 3 S-adenosyl-L-homocysteine + 3 H(+). The catalysed reaction is L-lysyl-[protein] + 3 S-adenosyl-L-methionine = N(6),N(6),N(6)-trimethyl-L-lysyl-[protein] + 3 S-adenosyl-L-homocysteine + 3 H(+). Functionally, binds to the promoter and regulates the transcription of target genes, maintaining them in an active state; at promoters, required for TATA binding proteins (TBPs, e.g. TBP1 and TBP2) and RNA polymerase II (Pol II) recruitment, and, in a subsequent event, is recruited by a phosphorylated form of Pol II to the +300-bp region of transcribed sequences to trimethylates nucleosomes. Histone trimethyltransferase that trimethylates 'Lys-4' of histone H3 (H3K4me3); H3 'Lys-4' methylation represents a specific tag for epigenetic transcriptional activation and is required for efficient elongation of transcription but not for transcription initiation. Methylates only a limited fraction of nucleosomes of target genes (e.g. FLC, NAP, XTH33 and WRKY70). Necessary for WDR5A occupancy at WRKY70 and LTP7 genes. Required to maintain the active state of class A (AP1 and AP2), class B (PI and AP3) and class C (AG, AGAMOUS) floral homeotic genes at early stages of flower development. Together with CLF, modulates AG nucleosome methylation statement. Involved in epigenetic regulation (e.g. H3K4me3) of the floral repressors FLC, FT and SOC1 to prevent the transition from vegetative to reproductive development, independently of the photoperiod; binds the active FLC locus before flowering, but this interaction is released upon the transition to flowering. Regulates floral organ identity and flowering transition. Functions as a receptor for the lipid messenger phosphatidylinositol 5-phosphate (PI5P), which negatively regulates its transcriptional activation activity. Exhibits histone methylase activity and subsequent transcriptional regulation on WRKY70 gene, and, to a lower extent on secondary defense-response targets salicylic acid (SA)-responsive gene PR1 and jasmonic acid (JA)-responsive gene THI2.1. Involved in response to dehydration stress-response in both abscisic acid (ABA)-dependent and ABA-independent pathways; this includes specific genes (e.g. COR15A, ADH1, CBF4, RD29A, RD29B, RD26, ABF3, NCED3 and ABA3) epigenetic regulation (e.g. H3K4me3 and Pol II recruitment) to promote their transcription and influence ABA production. Implicated in stomatal closure regulation. Indirect repressor of XTH genes (XTH33). Necessary for the phosphorylation of Pol II NRPB1 (e.g. Ser5P and Ser2P) at the promoters of target genes, thus regulating both early and late stages of transcription. Controls root growth and architecture by regulating the timing of root development, stem cell niche maintenance (e.g. quiescent center (QC)), and cell patterning during primary and lateral root development. Modulates cell cycle duration, cell production, and the transition from cell proliferation in the root apical meristem (RAM) to cell elongation. In terms of biological role, trimethylates A4/EF1A post-translationally at Lys-396. Required for actin cytoskeleton organization. The polypeptide is Histone H3-lysine(4) N-trimethyltransferase ATX1 (Arabidopsis thaliana (Mouse-ear cress)).